We begin with the raw amino-acid sequence, 607 residues long: MSPPPPQRPSPSRAGRANLFSSPPPPLPNCYDPKHRRPAPPPLPSARRLPSNRRRRHDQPPNPTTGNGGNPAFRAPHLRTAYRKPVPPVAAAGEGEALLAADASDAADGRAVVVGPSGLSFRLPGAPFDFRFSYSECPRAPPVAIREPAFLPFAPPTMPRPWTGKAPLLTKEEKARRRGVRLHTPLGEEAPRTVSAHGIMMEVRGRRKLDLARVSPGDGRSREEVLGEPLTAAEVRDLVKPHISHNRQLNIGRDGLTHNMLEMIHCHWRRQEICKVRCRGVPTVDMKNLCYHLEEKSGGKVIHRVGGVVFLYRGRNYNPRTRPRYPLMLWKPATPVYPKLIQEAPEGLTKEEADEMRRRGKDLLPICKLAKNGIYIYLVRDVRDAFEGSDLVKIDCEGLNPSDYKKIGAKLRDLVPCVLLSFDNEQILMFRGKEWKSRYPKPLTLIPKIRKNNVPMSSDESSSDEATDDDDRLAVREVLRPKMFELWTNAIESSVALMLDDAEVDALTPDSLLTRVEDFSVTSQVVEHSFPAVLVANDESNPDVLNAEYTEDEPETGTLEPQQHEFTESSDVAEDDHFEDDMLKRLESSVPLGALPIDAVVKQLNDE.

Positions 1–75 (MSPPPPQRPS…GNGGNPAFRA (75 aa)) are disordered. The transit peptide at 1-79 (MSPPPPQRPS…NPAFRAPHLR (79 aa)) directs the protein to the chloroplast. 2 consecutive CRM domains span residues 228–324 (EPLT…TRPR) and 346–442 (EGLT…YPKP). A CRS2 binding region spans residues 482-505 (KMFELWTNAIESSVALMLDDAEVD). The tract at residues 550–576 (TEDEPETGTLEPQQHEFTESSDVAEDD) is disordered.

Interacts with CRS2 and RNA. Part of large ribonucleo-protein complexes that include group IIB introns, CRS2 and CAF2.

The protein localises to the plastid. Its subcellular location is the chloroplast stroma. Its function is as follows. Required for the splicing of group IIB introns in chloroplasts. Forms splicing particles with CRS2. Interacts with RNA and confers intron specificity of the splicing particles. The sequence is that of CRS2-associated factor 2, chloroplastic from Oryza sativa subsp. japonica (Rice).